Reading from the N-terminus, the 223-residue chain is MASRESGGSRAAALLLVLGVERALALPEICTLCPGGMHNLSRVAAYCEDTSKLMQARCCLNQKGTILGLDLQNCSLKDPGPNFLQAYTAIIIDLQANPLKDDLANTFRGFTQLQTLILPQDVPCPGGSNAWDNVTSFKDKQICQGQRDLCNSTGSPEMCPENGSCASDGPGLLQCVCADGFHGYKCMRQGSFSLLMFFGILGSTTLAISILLWGTQRRKAKAS.

The N-terminal stretch at 1 to 25 (MASRESGGSRAAALLLVLGVERALA) is a signal peptide. Topologically, residues 26-193 (LPEICTLCPG…YKCMRQGSFS (168 aa)) are extracellular. One can recognise an EGF-like domain in the interval 146–187 (QRDLCNSTGSPEMCPENGSCASDGPGLLQCVCADGFHGYKCM). 3 cysteine pairs are disulfide-bonded: Cys-150-Cys-165, Cys-159-Cys-175, and Cys-177-Cys-186. Residues 194 to 214 (LLMFFGILGSTTLAISILLWG) form a helical membrane-spanning segment. Over 215 to 223 (TQRRKAKAS) the chain is Cytoplasmic.

As to quaternary structure, interacts with NELL1; the interaction promotes osteoblastic differentiation and mineralization. Interacts with SLC37A3; the interaction is direct and both proteins are mutually dependent for their stability.

The protein resides in the nucleus envelope. It is found in the cell membrane. Its subcellular location is the lysosome membrane. Its function is as follows. Promotes osteoblast cell differentiation and terminal mineralization. Plays a role in inducing the cell cycle arrest via inhibiting CCND1 expression in all-trans-retinoic acid (ATRA) signal pathway. In osteoclasts, forms a transporter complex with ATRAID for nitrogen-containing-bisphophonates (N-BPs) required for releasing N-BP molecules that have trafficked to lysosomes through fluid-phase endocytosis into the cytosol. This chain is All-trans retinoic acid-induced differentiation factor (Atraid), found in Mus musculus (Mouse).